Reading from the N-terminus, the 172-residue chain is Small ribosomal subunit protein uS5 (172 aa).

One can recognise an S5 DRBM domain in the interval 17–80; it reads LREKMIAVNR…DEARRKMIKV (64 aa).

This sequence belongs to the universal ribosomal protein uS5 family. In terms of assembly, part of the 30S ribosomal subunit. Contacts proteins S4 and S8.

In terms of biological role, with S4 and S12 plays an important role in translational accuracy. Its function is as follows. Located at the back of the 30S subunit body where it stabilizes the conformation of the head with respect to the body. The protein is Small ribosomal subunit protein uS5 of Polynucleobacter asymbioticus (strain DSM 18221 / CIP 109841 / QLW-P1DMWA-1) (Polynucleobacter necessarius subsp. asymbioticus).